The sequence spans 386 residues: Flap endonuclease 1 (386 aa).

The tract at residues 1–104 (MGILGLSKLI…GELAKRAERR (104 aa)) is N-domain. Aspartate 34 is a Mg(2+) binding site. DNA-binding residues include arginine 47 and arginine 70. Positions 86, 158, 160, 179, and 181 each coordinate Mg(2+). The I-domain stretch occupies residues 122-253 (EIEKFNRRLV…KRAIELINNY (132 aa)). DNA is bound at residue glutamate 158. Positions 231 and 233 each coordinate DNA. Position 233 (aspartate 233) interacts with Mg(2+). Residues 336-344 (TQVRLDSFF) are interaction with PCNA. The interval 351 to 386 (PNAVHAAKRKAEEAKKSANNKKAKTSGGAARGRRPK) is disordered.

It belongs to the XPG/RAD2 endonuclease family. FEN1 subfamily. Interacts with PCNA. Three molecules of FEN1 bind to one PCNA trimer with each molecule binding to one PCNA monomer. PCNA stimulates the nuclease activity without altering cleavage specificity. Mg(2+) is required as a cofactor. Phosphorylated. Phosphorylation upon DNA damage induces relocalization to the nuclear plasma.

It is found in the nucleus. It localises to the nucleolus. The protein resides in the nucleoplasm. Its subcellular location is the mitochondrion. Its function is as follows. Structure-specific nuclease with 5'-flap endonuclease and 5'-3' exonuclease activities involved in DNA replication and repair. During DNA replication, cleaves the 5'-overhanging flap structure that is generated by displacement synthesis when DNA polymerase encounters the 5'-end of a downstream Okazaki fragment. It enters the flap from the 5'-end and then tracks to cleave the flap base, leaving a nick for ligation. Also involved in the long patch base excision repair (LP-BER) pathway, by cleaving within the apurinic/apyrimidinic (AP) site-terminated flap. Acts as a genome stabilization factor that prevents flaps from equilibrating into structures that lead to duplications and deletions. Also possesses 5'-3' exonuclease activity on nicked or gapped double-stranded DNA, and exhibits RNase H activity. Also involved in replication and repair of rDNA and in repairing mitochondrial DNA. The polypeptide is Flap endonuclease 1 (Drosophila persimilis (Fruit fly)).